The primary structure comprises 349 residues: Phenylalanine--tRNA ligase alpha subunit (349 aa).

Glutamate 259 provides a ligand contact to Mg(2+).

Belongs to the class-II aminoacyl-tRNA synthetase family. Phe-tRNA synthetase alpha subunit type 1 subfamily. As to quaternary structure, tetramer of two alpha and two beta subunits. Mg(2+) serves as cofactor.

The protein resides in the cytoplasm. The enzyme catalyses tRNA(Phe) + L-phenylalanine + ATP = L-phenylalanyl-tRNA(Phe) + AMP + diphosphate + H(+). The chain is Phenylalanine--tRNA ligase alpha subunit from Lactobacillus gasseri (strain ATCC 33323 / DSM 20243 / BCRC 14619 / CIP 102991 / JCM 1131 / KCTC 3163 / NCIMB 11718 / NCTC 13722 / AM63).